We begin with the raw amino-acid sequence, 249 residues long: Probable proteasome subunit alpha type-2 (249 aa).

This sequence belongs to the peptidase T1A family. In terms of assembly, the 26S proteasome consists of a 20S proteasome core and two 19S regulatory subunits. The 20S proteasome core is composed of 28 subunits that are arranged in four stacked rings, resulting in a barrel-shaped structure. The two end rings are each formed by seven alpha subunits, and the two central rings are each formed by seven beta subunits. The catalytic chamber with the active sites is on the inside of the barrel.

Its subcellular location is the cytoplasm. It is found in the nucleus. Functionally, the proteasome is a multicatalytic proteinase complex which is characterized by its ability to cleave peptides with Arg, Phe, Tyr, Leu, and Glu adjacent to the leaving group at neutral or slightly basic pH. The proteasome has an ATP-dependent proteolytic activity. The chain is Probable proteasome subunit alpha type-2 (pca-2) from Neurospora crassa (strain ATCC 24698 / 74-OR23-1A / CBS 708.71 / DSM 1257 / FGSC 987).